A 552-amino-acid polypeptide reads, in one-letter code: Dihydroxy-acid dehydratase (552 aa).

Position 78 (aspartate 78) interacts with Mg(2+). Residue cysteine 119 participates in [2Fe-2S] cluster binding. The Mg(2+) site is built by aspartate 120 and lysine 121. Lysine 121 is subject to N6-carboxylysine. Cysteine 191 lines the [2Fe-2S] cluster pocket. Glutamate 442 is a binding site for Mg(2+). The Proton acceptor role is filled by serine 468.

This sequence belongs to the IlvD/Edd family. In terms of assembly, homodimer. The cofactor is [2Fe-2S] cluster. Requires Mg(2+) as cofactor.

It carries out the reaction (2R)-2,3-dihydroxy-3-methylbutanoate = 3-methyl-2-oxobutanoate + H2O. The catalysed reaction is (2R,3R)-2,3-dihydroxy-3-methylpentanoate = (S)-3-methyl-2-oxopentanoate + H2O. It participates in amino-acid biosynthesis; L-isoleucine biosynthesis; L-isoleucine from 2-oxobutanoate: step 3/4. The protein operates within amino-acid biosynthesis; L-valine biosynthesis; L-valine from pyruvate: step 3/4. In terms of biological role, functions in the biosynthesis of branched-chain amino acids. Catalyzes the dehydration of (2R,3R)-2,3-dihydroxy-3-methylpentanoate (2,3-dihydroxy-3-methylvalerate) into 2-oxo-3-methylpentanoate (2-oxo-3-methylvalerate) and of (2R)-2,3-dihydroxy-3-methylbutanoate (2,3-dihydroxyisovalerate) into 2-oxo-3-methylbutanoate (2-oxoisovalerate), the penultimate precursor to L-isoleucine and L-valine, respectively. In Ruminiclostridium cellulolyticum (strain ATCC 35319 / DSM 5812 / JCM 6584 / H10) (Clostridium cellulolyticum), this protein is Dihydroxy-acid dehydratase.